We begin with the raw amino-acid sequence, 525 residues long: Bifunctional purine biosynthesis protein PurH (525 aa).

The MGS-like domain occupies Met1 to Thr149.

Belongs to the PurH family.

It catalyses the reaction (6R)-10-formyltetrahydrofolate + 5-amino-1-(5-phospho-beta-D-ribosyl)imidazole-4-carboxamide = 5-formamido-1-(5-phospho-D-ribosyl)imidazole-4-carboxamide + (6S)-5,6,7,8-tetrahydrofolate. It carries out the reaction IMP + H2O = 5-formamido-1-(5-phospho-D-ribosyl)imidazole-4-carboxamide. It functions in the pathway purine metabolism; IMP biosynthesis via de novo pathway; 5-formamido-1-(5-phospho-D-ribosyl)imidazole-4-carboxamide from 5-amino-1-(5-phospho-D-ribosyl)imidazole-4-carboxamide (10-formyl THF route): step 1/1. Its pathway is purine metabolism; IMP biosynthesis via de novo pathway; IMP from 5-formamido-1-(5-phospho-D-ribosyl)imidazole-4-carboxamide: step 1/1. The sequence is that of Bifunctional purine biosynthesis protein PurH from Chlorobium phaeobacteroides (strain BS1).